The sequence spans 672 residues: Amidase chyE (672 aa).

The Nucleophile role is filled by Cys2. The Glutamine amidotransferase type-2 domain occupies 2–219 (CGISAFLCHP…PGHYLISRPN (218 aa)). An Asparagine synthetase domain is found at 250–639 (VRKRLLEAVK…TQEAVEKAFT (390 aa)).

Belongs to the asparagine synthetase family.

The protein operates within pigment biosynthesis. Its function is as follows. Amidase; part of the gene cluster that mediates the biosynthesis of the yellow pigment chrysogine. the NRPS chyA mediates the condensation of anthranilic acid and alanine into the intermediate 2-(2-aminopropanamido)benzoic acid. The remainder of the pathway is highly branched yielding at least 13 chrysogine-related compounds. The malonyl transferase chyE converts 2-(2-aminopropanamido)benzoic acid and 2-(2-aminopropanamido)benzamidine into 2-(2-(2-carboxyacetamido)propanamido)benzoic acid and 3-((1-((2-carbamoylphenyl)amino)-1-oxopropan-2-yl)amino)-3-oxopropanoic acid, respectively. ChyD is an amidase, being responsible for the amidation of the carboxylic acid moiety of 2-(2-aminopropanamido)benzoic acid, 2-(2-(2-carboxyacetamido)propanamido)benzoic acid and 2-(2-((4-amino-1-carboxy-4-oxobutyl)amino)propanamido)benzoic acid. ChyC is involved in the same reactions as ChyD, but plays a more minor role in the amidation reactions compared to chyD. The oxidoreductases chyH and chyM are involved in oxidation reactions that form N-pyruvoylanthranilamide from 2-(2-aminopropanamido)benzamidine and (1-((2-carbamoylphenyl)amino)-1-oxopropan-2-yl)glutamine, respectively. N-pyruvoylanthranilamide is further converted via two further branches in the pathway, yielding chrysogine and additional chrysogine-related coumpounds. Chrysogine is likely formed by a spontaneous ring closure from N-pyruvoylanthranilamide. The sequence is that of Amidase chyE from Penicillium rubens (strain ATCC 28089 / DSM 1075 / NRRL 1951 / Wisconsin 54-1255) (Penicillium chrysogenum).